We begin with the raw amino-acid sequence, 326 residues long: Putative ubiquitin-conjugating enzyme E2 38 (326 aa).

In terms of domain architecture, UBC core spans 54–214; sequence NWVKKVQDEW…VFLLSLKTMV (161 aa). The Glycyl thioester intermediate role is filled by Cys140. The interval 297-326 is disordered; the sequence is LAEKPKPPVNNANTENQSKKKTRKRSRSSR. Residues 315-326 show a composition bias toward basic residues; the sequence is KKKTRKRSRSSR.

The protein belongs to the ubiquitin-conjugating enzyme family.

The enzyme catalyses S-ubiquitinyl-[E1 ubiquitin-activating enzyme]-L-cysteine + [E2 ubiquitin-conjugating enzyme]-L-cysteine = [E1 ubiquitin-activating enzyme]-L-cysteine + S-ubiquitinyl-[E2 ubiquitin-conjugating enzyme]-L-cysteine.. It functions in the pathway protein modification; protein ubiquitination. Functionally, accepts the ubiquitin from the E1 complex and catalyzes its covalent attachment to other proteins. The chain is Putative ubiquitin-conjugating enzyme E2 38 (UBC38) from Arabidopsis thaliana (Mouse-ear cress).